A 369-amino-acid chain; its full sequence is Anhydro-N-acetylmuramic acid kinase (369 aa).

Residue 12-19 (GTSLDGVD) participates in ATP binding.

It belongs to the anhydro-N-acetylmuramic acid kinase family.

It catalyses the reaction 1,6-anhydro-N-acetyl-beta-muramate + ATP + H2O = N-acetyl-D-muramate 6-phosphate + ADP + H(+). It functions in the pathway amino-sugar metabolism; 1,6-anhydro-N-acetylmuramate degradation. It participates in cell wall biogenesis; peptidoglycan recycling. In terms of biological role, catalyzes the specific phosphorylation of 1,6-anhydro-N-acetylmuramic acid (anhMurNAc) with the simultaneous cleavage of the 1,6-anhydro ring, generating MurNAc-6-P. Is required for the utilization of anhMurNAc either imported from the medium or derived from its own cell wall murein, and thus plays a role in cell wall recycling. The protein is Anhydro-N-acetylmuramic acid kinase of Actinobacillus pleuropneumoniae serotype 3 (strain JL03).